Consider the following 214-residue polypeptide: Adenylate kinase (214 aa).

ATP is bound at residue 10-15 (GAGKGT). Positions 30–59 (STGDMLRAAIKAGTELGKQAKAVIDAGQLV) are NMP. AMP contacts are provided by residues Thr-31, Arg-36, 57–59 (QLV), 85–88 (GFPR), and Gln-92. Residues 122–159 (GRRAHLPSGRTYHVVYNPPKVEGKDDVTGEDLVVRDDD) form an LID region. ATP contacts are provided by residues Arg-123 and 132–133 (TY). Arg-156 and Arg-167 together coordinate AMP. Lys-200 serves as a coordination point for ATP.

It belongs to the adenylate kinase family. Monomer.

The protein resides in the cytoplasm. The enzyme catalyses AMP + ATP = 2 ADP. The protein operates within purine metabolism; AMP biosynthesis via salvage pathway; AMP from ADP: step 1/1. Functionally, catalyzes the reversible transfer of the terminal phosphate group between ATP and AMP. Plays an important role in cellular energy homeostasis and in adenine nucleotide metabolism. The polypeptide is Adenylate kinase (Vibrio campbellii (strain ATCC BAA-1116)).